Here is a 437-residue protein sequence, read N- to C-terminus: GTPase HflX (437 aa).

The tract at residues 150-173 is disordered; sequence DRQGGGSGGGKGGGGAARGEGEKQ. The segment covering 152 to 167 has biased composition (gly residues); sequence QGGGSGGGKGGGGAAR. Positions 212–382 constitute a Hflx-type G domain; that stretch reads ATAAIVGYTN…ACVEMLESRV (171 aa). GTP contacts are provided by residues 218 to 225, 243 to 247, 265 to 268, 331 to 334, and 360 to 362; these read GYTNAGKS, FATLD, DTVG, NKVD, and SVK. The Mg(2+) site is built by Ser225 and Thr245.

This sequence belongs to the TRAFAC class OBG-HflX-like GTPase superfamily. HflX GTPase family. Monomer. Associates with the 50S ribosomal subunit. Mg(2+) is required as a cofactor.

Its subcellular location is the cytoplasm. In terms of biological role, GTPase that associates with the 50S ribosomal subunit and may have a role during protein synthesis or ribosome biogenesis. The protein is GTPase HflX of Akkermansia muciniphila (strain ATCC BAA-835 / DSM 22959 / JCM 33894 / BCRC 81048 / CCUG 64013 / CIP 107961 / Muc).